Here is a 135-residue protein sequence, read N- to C-terminus: L-alanine exporter AlaE (135 aa).

The next 3 membrane-spanning stretches (helical) occupy residues 9–29 (VATV…IAGM), 75–95 (DILA…LIAG), and 96–116 (ASFA…ILLA).

It belongs to the AlaE exporter family.

It is found in the cell inner membrane. Exports L-alanine. This chain is L-alanine exporter AlaE, found in Cereibacter sphaeroides (strain ATCC 17023 / DSM 158 / JCM 6121 / CCUG 31486 / LMG 2827 / NBRC 12203 / NCIMB 8253 / ATH 2.4.1.) (Rhodobacter sphaeroides).